Here is a 473-residue protein sequence, read N- to C-terminus: Trigger factor (473 aa).

The PPIase FKBP-type domain maps to 174 to 261 (GDIAVVSFKG…LKDLKEKELP (88 aa)). The disordered stretch occupies residues 442 to 473 (ATKLTTKTTTKATTKKGVKTKSKPKVNKKEKN). The span at 444–453 (KLTTKTTTKA) shows a compositional bias: low complexity. Over residues 454–467 (TTKKGVKTKSKPKV) the composition is skewed to basic residues.

This sequence belongs to the FKBP-type PPIase family. Tig subfamily.

It localises to the cytoplasm. It carries out the reaction [protein]-peptidylproline (omega=180) = [protein]-peptidylproline (omega=0). Functionally, involved in protein export. Acts as a chaperone by maintaining the newly synthesized protein in an open conformation. Functions as a peptidyl-prolyl cis-trans isomerase. The protein is Trigger factor of Prochlorococcus marinus subsp. pastoris (strain CCMP1986 / NIES-2087 / MED4).